A 316-amino-acid polypeptide reads, in one-letter code: Transaldolase A (316 aa).

Catalysis depends on Lys131, which acts as the Schiff-base intermediate with substrate.

It belongs to the transaldolase family. Type 1 subfamily. In terms of assembly, homodimer.

The protein localises to the cytoplasm. The catalysed reaction is D-sedoheptulose 7-phosphate + D-glyceraldehyde 3-phosphate = D-erythrose 4-phosphate + beta-D-fructose 6-phosphate. The protein operates within carbohydrate degradation; pentose phosphate pathway; D-glyceraldehyde 3-phosphate and beta-D-fructose 6-phosphate from D-ribose 5-phosphate and D-xylulose 5-phosphate (non-oxidative stage): step 2/3. Functionally, transaldolase is important for the balance of metabolites in the pentose-phosphate pathway. This is Transaldolase A (talA) from Escherichia coli O157:H7.